We begin with the raw amino-acid sequence, 300 residues long: ATP synthase gamma chain (300 aa).

Belongs to the ATPase gamma chain family. In terms of assembly, F-type ATPases have 2 components, CF(1) - the catalytic core - and CF(0) - the membrane proton channel. CF(1) has five subunits: alpha(3), beta(3), gamma(1), delta(1), epsilon(1). CF(0) has three main subunits: a, b and c.

The protein localises to the cell membrane. Produces ATP from ADP in the presence of a proton gradient across the membrane. The gamma chain is believed to be important in regulating ATPase activity and the flow of protons through the CF(0) complex. The chain is ATP synthase gamma chain from Enterococcus hirae (strain ATCC 9790 / DSM 20160 / JCM 8729 / LMG 6399 / NBRC 3181 / NCIMB 6459 / NCDO 1258 / NCTC 12367 / WDCM 00089 / R).